Reading from the N-terminus, the 453-residue chain is Ribosome biogenesis protein YTM1 (453 aa).

The segment at 8–89 is ubiquitin-like (UBL) domain; the sequence is VKLRFFTREQ…ETFLNVEYTR (82 aa). Residues 99 to 453 are sufficient for interaction with ERB1 and association with 66S pre-ribosomes; that stretch reads SFSNEDWVSS…INKGDNIFKS (355 aa). 7 WD repeats span residues 101–139, 141–179, 199–237, 278–318, 320–359, 366–406, and 417–453; these read SNED…EKQY, GHSA…LKQP, GHKA…MTVV, SHTG…CIDT, TTSY…TSKI, GHKN…PMYT, and GVND…IFKS.

It belongs to the WD repeat WDR12/YTM1 family. As to quaternary structure, component of the NOP7 complex, composed of ERB1, NOP7 and YTM1. The complex is held together by ERB1, which interacts with NOP7 via its N-terminal domain and with YTM1 via a high-affinity interaction between the seven-bladed beta-propeller domains of the 2 proteins. The NOP7 complex associates with the 66S pre-ribosome. Interacts (via UBL domain) with MDN1 (via VWFA/MIDAS domain).

It is found in the nucleus. It localises to the nucleolus. The protein localises to the nucleoplasm. Functionally, component of the NOP7 complex, which is required for maturation of the 25S and 5.8S ribosomal RNAs and formation of the 60S ribosome. The chain is Ribosome biogenesis protein YTM1 from Vanderwaltozyma polyspora (strain ATCC 22028 / DSM 70294 / BCRC 21397 / CBS 2163 / NBRC 10782 / NRRL Y-8283 / UCD 57-17) (Kluyveromyces polysporus).